The following is a 230-amino-acid chain: Cytochrome c oxidase subunit 2 (230 aa).

Topologically, residues 1-14 (MAHPSQLGFQDAAS) are mitochondrial intermembrane. Residues 15–45 (PVMEELLHFHDHALMIVFLISTLVLYIIAAT) traverse the membrane as a helical segment. The Mitochondrial matrix segment spans residues 46 to 59 (ASTKLTDKYILDSQ). A helical membrane pass occupies residues 60 to 87 (EIEVIWTIMPAVILILIALPSLRILYLM). Topologically, residues 88–230 (DEINDPHLTV…NWSSLMLEDA (143 aa)) are mitochondrial intermembrane. The Cu cation site is built by His161, Cys196, Glu198, Cys200, His204, and Met207. Residue Glu198 coordinates Mg(2+).

It belongs to the cytochrome c oxidase subunit 2 family. Component of the cytochrome c oxidase (complex IV, CIV), a multisubunit enzyme composed of 14 subunits. The complex is composed of a catalytic core of 3 subunits MT-CO1, MT-CO2 and MT-CO3, encoded in the mitochondrial DNA, and 11 supernumerary subunits COX4I, COX5A, COX5B, COX6A, COX6B, COX6C, COX7A, COX7B, COX7C, COX8 and NDUFA4, which are encoded in the nuclear genome. The complex exists as a monomer or a dimer and forms supercomplexes (SCs) in the inner mitochondrial membrane with NADH-ubiquinone oxidoreductase (complex I, CI) and ubiquinol-cytochrome c oxidoreductase (cytochrome b-c1 complex, complex III, CIII), resulting in different assemblies (supercomplex SCI(1)III(2)IV(1) and megacomplex MCI(2)III(2)IV(2)). Found in a complex with TMEM177, COA6, COX18, COX20, SCO1 and SCO2. Interacts with TMEM177 in a COX20-dependent manner. Interacts with COX20. Interacts with COX16. Cu cation is required as a cofactor.

The protein resides in the mitochondrion inner membrane. It catalyses the reaction 4 Fe(II)-[cytochrome c] + O2 + 8 H(+)(in) = 4 Fe(III)-[cytochrome c] + 2 H2O + 4 H(+)(out). In terms of biological role, component of the cytochrome c oxidase, the last enzyme in the mitochondrial electron transport chain which drives oxidative phosphorylation. The respiratory chain contains 3 multisubunit complexes succinate dehydrogenase (complex II, CII), ubiquinol-cytochrome c oxidoreductase (cytochrome b-c1 complex, complex III, CIII) and cytochrome c oxidase (complex IV, CIV), that cooperate to transfer electrons derived from NADH and succinate to molecular oxygen, creating an electrochemical gradient over the inner membrane that drives transmembrane transport and the ATP synthase. Cytochrome c oxidase is the component of the respiratory chain that catalyzes the reduction of oxygen to water. Electrons originating from reduced cytochrome c in the intermembrane space (IMS) are transferred via the dinuclear copper A center (CU(A)) of subunit 2 and heme A of subunit 1 to the active site in subunit 1, a binuclear center (BNC) formed by heme A3 and copper B (CU(B)). The BNC reduces molecular oxygen to 2 water molecules using 4 electrons from cytochrome c in the IMS and 4 protons from the mitochondrial matrix. The chain is Cytochrome c oxidase subunit 2 (mt-co2) from Tetraodon nigroviridis (Spotted green pufferfish).